Here is a 72-residue protein sequence, read N- to C-terminus: Large ribosomal subunit protein bL31 (72 aa).

Residues C16, C18, C37, and C40 each coordinate Zn(2+).

The protein belongs to the bacterial ribosomal protein bL31 family. Type A subfamily. In terms of assembly, part of the 50S ribosomal subunit. Zn(2+) serves as cofactor.

In terms of biological role, binds the 23S rRNA. In Buchnera aphidicola subsp. Acyrthosiphon pisum (strain Tuc7), this protein is Large ribosomal subunit protein bL31.